A 292-amino-acid polypeptide reads, in one-letter code: MSMPATSTKTTKLATSLIDEYALLGWRAMLTEVNLSPKPGLVDRINCGAHKDMALEDFHRSALAIQGWLPRFIEFGACSAEMAPEAVLNGLRPIGMACEGDMFRATAGVNTHKGSIFSLGLLCAAIGRLLQLNQPVTPTTVCSTAASFCRGLTDRELRTNNSRLTAGQRLYQQLGLTGARGEAEAGYPLVINHALPHYLTLLDQGLDPELALLDTLLLLMATNGDTNVASRGGEGGLRWLQREAQTLLQKGGIRTPADLDYLRQFDRECIERNLSPGGSADLLILTWFLAQI.

This sequence belongs to the CitG/MdcB family.

The catalysed reaction is 3'-dephospho-CoA + ATP = 2'-(5''-triphospho-alpha-D-ribosyl)-3'-dephospho-CoA + adenine. Catalyzes the formation of 2-(5''-triphosphoribosyl)-3'-dephosphocoenzyme-A, the precursor of the prosthetic group of the holo-acyl carrier protein (gamma chain) of citrate lyase, from ATP and dephospho-CoA. The chain is 2-(5''-triphosphoribosyl)-3'-dephosphocoenzyme-A synthase from Escherichia coli O127:H6 (strain E2348/69 / EPEC).